The sequence spans 367 residues: Peptide chain release factor 2 (367 aa).

Residue glutamine 254 is modified to N5-methylglutamine.

Belongs to the prokaryotic/mitochondrial release factor family. Methylated by PrmC. Methylation increases the termination efficiency of RF2.

It localises to the cytoplasm. In terms of biological role, peptide chain release factor 2 directs the termination of translation in response to the peptide chain termination codons UGA and UAA. The protein is Peptide chain release factor 2 of Janthinobacterium sp. (strain Marseille) (Minibacterium massiliensis).